Consider the following 440-residue polypeptide: Xylose isomerase (440 aa).

Residues His101 and Asp104 contribute to the active site. 7 residues coordinate Mg(2+): Glu232, Glu268, His271, Asp296, Asp307, Asp309, and Asp339.

Belongs to the xylose isomerase family. Homotetramer. Mg(2+) is required as a cofactor.

The protein resides in the cytoplasm. The catalysed reaction is alpha-D-xylose = alpha-D-xylulofuranose. The sequence is that of Xylose isomerase from Enterobacter sp. (strain 638).